The primary structure comprises 340 residues: Guanine nucleotide-binding protein subunit beta-4 (340 aa).

An N-acetylserine modification is found at S2. S2 is modified (phosphoserine). WD repeat units follow at residues 53 to 92 (GHLA…KMHA), 95 to 134 (LRSS…GNVR), 141 to 179 (GHTG…QTTT), 182 to 221 (GHSG…CRQS), and 224 to 263 (GHVS…ELLL). H266 is subject to Phosphohistidine. WD repeat units lie at residues 268–307 (NIIC…RAGV) and 310–339 (GHDN…LRIW).

It belongs to the WD repeat G protein beta family. In terms of assembly, g proteins are composed of 3 units, alpha, beta and gamma. In terms of tissue distribution, strongly expressed in lung and placenta, whereas it is weakly expressed in brain and heart. Abundantly expressed in the axons and Schwann cells of peripheral nerves.

Its function is as follows. Guanine nucleotide-binding proteins (G proteins) are involved as a modulator or transducer in various transmembrane signaling systems. The beta and gamma chains are required for the GTPase activity, for replacement of GDP by GTP, and for G protein-effector interaction. The protein is Guanine nucleotide-binding protein subunit beta-4 (GNB4) of Homo sapiens (Human).